Here is a 283-residue protein sequence, read N- to C-terminus: Prolyl 4-hydroxylase 1 (283 aa).

Over 1–6 (MAPAMK) the chain is Cytoplasmic. Residues 7–27 (IVFGLLTFVTVGMVIGSLLQL) traverse the membrane as a helical; Signal-anchor for type II membrane protein segment. Over 28 to 283 (AFINRLEDSY…TKWMRQKATS (256 aa)) the chain is Lumenal. The Fe2OG dioxygenase domain occupies 162–279 (NGELIQVLRY…KWSATKWMRQ (118 aa)). Fe cation-binding residues include histidine 180, aspartate 182, and histidine 260. Lysine 270 serves as a coordination point for 2-oxoglutarate.

The protein belongs to the P4HA family. Fe(2+) is required as a cofactor. L-ascorbate serves as cofactor.

Its subcellular location is the endoplasmic reticulum membrane. It carries out the reaction L-prolyl-[collagen] + 2-oxoglutarate + O2 = trans-4-hydroxy-L-prolyl-[collagen] + succinate + CO2. Its function is as follows. Catalyzes the post-translational formation of 4-hydroxyproline in -Xaa-Pro-Gly- sequences in proline-rich peptide sequences of plant glycoproteins and other proteins. Hydroxylates preferentially prolines in second positions in the -Pro-Pro-Gly-triplets. Hydroxyprolines are important constituent of many plant cell wall glycoproteins such as extensins, hydroxyproline-rich glycoproteins, lectins and arabinogalactan proteins. Can hydroxylate collagen-like peptides and hypoxia-inducible transcription factor peptides. The polypeptide is Prolyl 4-hydroxylase 1 (Arabidopsis thaliana (Mouse-ear cress)).